A 181-amino-acid chain; its full sequence is Large ribosomal subunit protein uL16 (181 aa).

This sequence belongs to the universal ribosomal protein uL16 family.

This is Large ribosomal subunit protein uL16 from Pyrococcus abyssi (strain GE5 / Orsay).